A 409-amino-acid chain; its full sequence is Putative fatty acyl-CoA reductase 7 (409 aa).

Belongs to the fatty acyl-CoA reductase family.

This is Putative fatty acyl-CoA reductase 7 (FAR7) from Arabidopsis thaliana (Mouse-ear cress).